The sequence spans 97 residues: Large ribosomal subunit protein uL23 (97 aa).

This sequence belongs to the universal ribosomal protein uL23 family. Part of the 50S ribosomal subunit. Contacts protein L29, and trigger factor when it is bound to the ribosome.

One of the early assembly proteins it binds 23S rRNA. One of the proteins that surrounds the polypeptide exit tunnel on the outside of the ribosome. Forms the main docking site for trigger factor binding to the ribosome. This is Large ribosomal subunit protein uL23 from Mesorhizobium japonicum (strain LMG 29417 / CECT 9101 / MAFF 303099) (Mesorhizobium loti (strain MAFF 303099)).